A 289-amino-acid chain; its full sequence is Probable acetolactate synthase small subunit (289 aa).

Residue Ser-34 is modified to Phosphoserine. One can recognise an ACT domain in the interval 72–149 (VFNCLVQNEP…AVLDYTGTSM (78 aa)).

The protein belongs to the acetolactate synthase small subunit family.

It localises to the cytoplasm. It functions in the pathway amino-acid biosynthesis; L-isoleucine biosynthesis; L-isoleucine from 2-oxobutanoate: step 1/4. It participates in amino-acid biosynthesis; L-valine biosynthesis; L-valine from pyruvate: step 1/4. Its function is as follows. Stimulates activity of the acetolactate synthase catalytic subunit ilv1. This is Probable acetolactate synthase small subunit from Schizosaccharomyces pombe (strain 972 / ATCC 24843) (Fission yeast).